A 310-amino-acid chain; its full sequence is Homoserine kinase (310 aa).

ATP is bound at residue Pro-91–Cys-101.

The protein belongs to the GHMP kinase family. Homoserine kinase subfamily.

The protein resides in the cytoplasm. The catalysed reaction is L-homoserine + ATP = O-phospho-L-homoserine + ADP + H(+). It functions in the pathway amino-acid biosynthesis; L-threonine biosynthesis; L-threonine from L-aspartate: step 4/5. Functionally, catalyzes the ATP-dependent phosphorylation of L-homoserine to L-homoserine phosphate. This is Homoserine kinase from Escherichia coli (strain SE11).